We begin with the raw amino-acid sequence, 934 residues long: MTRHLTLCFILLIILIDKSEACFCDHYPWTHWSSCSKSCNSGTQSRQRQIVVNDYYRDNSCDQLCTKQETRQCNVETCPINCVLGDYGTWSDCDPCIRKQVKVRSVLRPSQFGGQPCTEPLVTFQPCVPSELCKIEETDCKNKFLCDSGRCIPSKLKCNGENDCGDNSDERNCGRTKPVCSRTYTPIPSVQLMGAGFHFLAGEPRGDVPDNSFTGGICKSVRSSRTSNPHRVPANLENVNFEVQTIEDDLKTDFYKDLATIGKNKNEDRSLSGEKKDSFYVPIFYSSKKSENFQRNSGFKNAIEASHKKDSSFVRIHKVIKVLNFTMKTTDLQLSDVFLKALIHLPLEYNFALYSRIFDDFGTHYFTSGSLGGKYDLLYQFSRQELQNSGLTEEETRNCVRYETKKRFLFFTKTYKEDRCTTNRLSEKYKGSFLQGSEKSISLVQGGRSQQAAALAWEKGSSGPEANVFSEWLESVKENPAVVDYELAPIIDLVRNIPCAVTKRNNLRKALQEYAAKFDPCQCAPCPNNGRPRLSGTECLCVCQSGTYGENCEKRSPDYKSNAVDGNWGCWSSWSACNAAYRRSRSRECNNPEPQRGGQRCEGKHWQEEDCTFSIMEKVGQPCISDDEEIKEVDLAEPEADSGCPQPPLPENAFVWNEKKLYSVGEEVEISCLTGFKAVGYQYFRCLPDRTWRQGDVECQRTECLKPVVQDVLTISPFQSVYKIGESIELTCPRGFVVAGPSRYTCKGDSWTPPIPNSLSCEKDILTKSKGLCQPGQKQSGSECVCMSPEEDCSSYSEDLCIFDEGSSQYFTSSACKFLAEKCLNSNQFHFVHAGSCQEGPQLEWGLERLKLAMKSTKRVPCGYDTCYDWEKCSAHTSNCVCLLPPQCPKDENQLHCVKMGSSMRGKTVNICTLGAVRCANRKVEILNPGRCLD.

The first 21 residues, 1–21 (MTRHLTLCFILLIILIDKSEA), serve as a signal peptide directing secretion. Disulfide bonds link Cys22-Cys61, Cys24-Cys65, Cys35-Cys73, Cys39-Cys78, Cys82-Cys117, Cys93-Cys127, Cys96-Cys133, Cys140-Cys151, Cys146-Cys164, Cys158-Cys173, and Cys180-Cys218. TSP type-1 domains are found at residues 22–79 (CFCD…ETCP) and 81–134 (NCVL…ELCK). C-linked (Man) tryptophan glycosylation is found at Trp29 and Trp32. Residue Ser38 is glycosylated (O-linked (Fuc...) serine). Trp90 carries a C-linked (Man) tryptophan glycan. Residues 138 to 175 (TDCKNKFLCDSGRCIPSKLKCNGENDCGDNSDERNCGR) form the LDL-receptor class A domain. Leu156, Asn159, Glu161, Asp163, Asp169, and Glu170 together coordinate Ca(2+). The 347-residue stretch at 176-522 (TKPVCSRTYT…EYAAKFDPCQ (347 aa)) folds into the MACPF domain. The beta stranded transmembrane segment at 278–290 (SFYVPIFYSSKKS) threads the bilayer. A glycan (N-linked (GlcNAc...) asparagine) is linked at Asn324. Thr392 carries O-linked (Fuc...) threonine glycosylation. Cystine bridges form between Cys399–Cys420, Cys499–Cys623, Cys521–Cys570, Cys523–Cys539, Cys526–Cys541, Cys543–Cys552, Cys577–Cys611, Cys589–Cys601, Cys644–Cys686, Cys672–Cys699, Cys704–Cys746, Cys732–Cys761, Cys773–Cys823, Cys784–Cys801, Cys786–Cys837, Cys793–Cys816, Cys862–Cys873, Cys867–Cys919, Cys880–Cys897, Cys882–Cys932, and Cys888–Cys912. Residues 402-415 (YETKKRFLFFTKTY) traverse the membrane as a beta stranded segment. The EGF-like domain occupies 523-553 (CAPCPNNGRPRLSGTECLCVCQSGTYGENCE). The 48-residue stretch at 565–612 (DGNWGCWSSWSACNAAYRRSRSRECNNPEPQRGGQRCEGKHWQEEDCT) folds into the TSP type-1 3 domain. Trp568, Trp571, and Trp574 each carry a C-linked (Man) tryptophan glycan. 2 CCP regions span residues 611-688 (CTFS…RCLP) and 689-765 (DRTW…EKDI). Sushi domains lie at 642-701 (SGCP…ECQR) and 702-763 (TECL…SCEK). A C5B-binding domain region spans residues 642-934 (SGCPQPPLPE…EILNPGRCLD (293 aa)). Factor I module (FIM) regions lie at residues 766-840 (LTKS…CQEG) and 858-934 (KRVP…RCLD). Positions 780–839 (SGSECVCMSPEEDCSSYSEDLCIFDEGSSQYFTSSACKFLAEKCLNSNQFHFVHAGSCQE) constitute a Kazal-like 1 domain. In terms of domain architecture, Kazal-like 2 spans 876–934 (HTSNCVCLLPPQCPKDENQLHCVKMGSSMRGKTVNICTLGAVRCANRKVEILNPGRCLD).

The protein belongs to the complement C6/C7/C8/C9 family. As to quaternary structure, component of the membrane attack complex (MAC), composed of complement C5b, C6, C7, C8A, C8B, C8G and multiple copies of the pore-forming subunit C9. All cysteine residues are assumed to be cross-linked to one another. Individual modules containing an even number of conserved cysteine residues are supposed to have disulfide linkages only within the same module.

It is found in the secreted. Its subcellular location is the target cell membrane. Membrane attack complex (MAC) assembly is inhibited by CD59, thereby protecting self-cells from damage during complement activation. MAC assembly is also inhibited by clusterin (CLU) chaperones that inhibit polymerization of C9. In terms of biological role, component of the membrane attack complex (MAC), a multiprotein complex activated by the complement cascade, which inserts into a target cell membrane and forms a pore, leading to target cell membrane rupture and cell lysis. The MAC is initiated by proteolytic cleavage of C5 into complement C5b in response to the classical, alternative, lectin and GZMK complement pathways. The complement pathways consist in a cascade of proteins that leads to phagocytosis and breakdown of pathogens and signaling that strengthens the adaptive immune system. Together with component C5b, involved in MAC complex assembly: complement C5b and C6 associate with the outer leaflet of target cell membrane, reducing the energy for membrane bending. The sequence is that of Complement component C6 (C6) from Rattus norvegicus (Rat).